The primary structure comprises 355 residues: Putative early 40.3 kDa protein (355 aa).

This protein is required for viral late gene expression. The polypeptide is Putative early 40.3 kDa protein (DA41) (Orgyia pseudotsugata multicapsid polyhedrosis virus (OpMNPV)).